The primary structure comprises 849 residues: Autoinducer 1 sensor kinase/phosphatase LuxN (849 aa).

The next 7 membrane-spanning stretches (helical) occupy residues 9-29, 41-61, 160-180, 196-216, 220-242, 251-275, and 283-301; these read IVYA…MWLF, VIFG…IAWI, SYFF…LVAM, IAGI…MTYF, FSLT…YALL, YIAY…AIFI, and WLIA…QLLY. The Histidine kinase domain maps to 468–683; sequence SIAHEMRNPL…EFHLYFPVVP (216 aa). Histidine 471 carries the post-translational modification Phosphohistidine; by autocatalysis. The Response regulatory domain maps to 722 to 835; that stretch reads TVLIVDDKEV…ALRHVLGNWL (114 aa). The residue at position 771 (aspartate 771) is a 4-aspartylphosphate.

It localises to the cell inner membrane. It catalyses the reaction ATP + protein L-histidine = ADP + protein N-phospho-L-histidine.. The phosphatase activity is constitutive and the kinase activity is regulated by the presence or absence of AI-1. At low cell density the kinase activity overrides the phosphatase activity. At low cell density, in the absence of AI-1 (autoinducer 1), LuxN has a kinase activity and autophosphorylates on His-471. The phosphoryl group is then transferred on Asp-771 of the response regulator domain. The phosphoryl group is transferred to LuxU, and ultimately to LuxO. At high cell density, in the presence of AI-1, the kinase activity is inactivated, and the response regulator domain has a phosphatase activity. LuxN phosphatase acts on itself. As LuxU could function to establish an equilibrium between the aspartyl-phosphate of LuxN and the aspartyl-phosphate of LuxO, LuxU transfers phosphate from LuxO to LuxN and finally phosphate is drained from the system. The chain is Autoinducer 1 sensor kinase/phosphatase LuxN (luxN) from Vibrio campbellii (strain ATCC BAA-1116).